The sequence spans 496 residues: Chromosomal replication initiator protein DnaA (496 aa).

The tract at residues 1-76 (MKMDSAVSEE…TELWQEENPQ (76 aa)) is domain I, interacts with DnaA modulators. A domain II region spans residues 76–150 (QILKVEVVVR…AAATDAVLGS (75 aa)). The interval 151–373 (PLDPRYTFDT…GAFNQLLFRQ (223 aa)) is domain III, AAA+ region. The ATP site is built by glycine 197, glycine 199, lysine 200, and threonine 201. A domain IV, binds dsDNA region spans residues 374 to 496 (SFEPNISIDR…LKRLINDQAA (123 aa)).

This sequence belongs to the DnaA family. As to quaternary structure, oligomerizes as a right-handed, spiral filament on DNA at oriC.

The protein localises to the cytoplasm. Its function is as follows. Plays an essential role in the initiation and regulation of chromosomal replication. ATP-DnaA binds to the origin of replication (oriC) to initiate formation of the DNA replication initiation complex once per cell cycle. Binds the DnaA box (a 9 base pair repeat at the origin) and separates the double-stranded (ds)DNA. Forms a right-handed helical filament on oriC DNA; dsDNA binds to the exterior of the filament while single-stranded (ss)DNA is stabiized in the filament's interior. The ATP-DnaA-oriC complex binds and stabilizes one strand of the AT-rich DNA unwinding element (DUE), permitting loading of DNA polymerase. After initiation quickly degrades to an ADP-DnaA complex that is not apt for DNA replication. Binds acidic phospholipids. In Brucella suis biovar 1 (strain 1330), this protein is Chromosomal replication initiator protein DnaA.